Consider the following 110-residue polypeptide: Large ribosomal subunit protein uL22 (110 aa).

It belongs to the universal ribosomal protein uL22 family. In terms of assembly, part of the 50S ribosomal subunit.

Functionally, this protein binds specifically to 23S rRNA; its binding is stimulated by other ribosomal proteins, e.g. L4, L17, and L20. It is important during the early stages of 50S assembly. It makes multiple contacts with different domains of the 23S rRNA in the assembled 50S subunit and ribosome. The globular domain of the protein is located near the polypeptide exit tunnel on the outside of the subunit, while an extended beta-hairpin is found that lines the wall of the exit tunnel in the center of the 70S ribosome. The sequence is that of Large ribosomal subunit protein uL22 from Verminephrobacter eiseniae (strain EF01-2).